A 193-amino-acid polypeptide reads, in one-letter code: MLVTLTPELLLQAYTQGFFPMAEGQGQRIYWYEPDPRAVFELDKVHFSKRLLRVIRQERFEIRYSTAFERVIRACADRPSTWISEEIIRTYIRLYRTGYGQSVESWLDGELVGGLYGVSLGGAFFGESMFCRVSDASKVAFFHLVERLRGRGFALLDTQFANEHLVQFHVVEIPRREYRQRLKGALALPCKFR.

The protein belongs to the L/F-transferase family.

Its subcellular location is the cytoplasm. It catalyses the reaction N-terminal L-lysyl-[protein] + L-leucyl-tRNA(Leu) = N-terminal L-leucyl-L-lysyl-[protein] + tRNA(Leu) + H(+). The catalysed reaction is N-terminal L-arginyl-[protein] + L-leucyl-tRNA(Leu) = N-terminal L-leucyl-L-arginyl-[protein] + tRNA(Leu) + H(+). It carries out the reaction L-phenylalanyl-tRNA(Phe) + an N-terminal L-alpha-aminoacyl-[protein] = an N-terminal L-phenylalanyl-L-alpha-aminoacyl-[protein] + tRNA(Phe). In terms of biological role, functions in the N-end rule pathway of protein degradation where it conjugates Leu, Phe and, less efficiently, Met from aminoacyl-tRNAs to the N-termini of proteins containing an N-terminal arginine or lysine. The chain is Leucyl/phenylalanyl-tRNA--protein transferase from Gloeobacter violaceus (strain ATCC 29082 / PCC 7421).